The following is a 240-amino-acid chain: Pyridoxine 5'-phosphate synthase (240 aa).

Asn-7 provides a ligand contact to 3-amino-2-oxopropyl phosphate. Position 9–10 (9–10 (DH)) interacts with 1-deoxy-D-xylulose 5-phosphate. Arg-18 is a binding site for 3-amino-2-oxopropyl phosphate. His-43 acts as the Proton acceptor in catalysis. Residues Arg-45 and His-50 each contribute to the 1-deoxy-D-xylulose 5-phosphate site. Glu-70 acts as the Proton acceptor in catalysis. 1-deoxy-D-xylulose 5-phosphate is bound at residue Thr-100. His-191 serves as the catalytic Proton donor. 3-amino-2-oxopropyl phosphate-binding positions include Gly-192 and 213–214 (GH).

Belongs to the PNP synthase family. Homooctamer; tetramer of dimers.

It localises to the cytoplasm. It catalyses the reaction 3-amino-2-oxopropyl phosphate + 1-deoxy-D-xylulose 5-phosphate = pyridoxine 5'-phosphate + phosphate + 2 H2O + H(+). It functions in the pathway cofactor biosynthesis; pyridoxine 5'-phosphate biosynthesis; pyridoxine 5'-phosphate from D-erythrose 4-phosphate: step 5/5. Functionally, catalyzes the complicated ring closure reaction between the two acyclic compounds 1-deoxy-D-xylulose-5-phosphate (DXP) and 3-amino-2-oxopropyl phosphate (1-amino-acetone-3-phosphate or AAP) to form pyridoxine 5'-phosphate (PNP) and inorganic phosphate. This Crocosphaera subtropica (strain ATCC 51142 / BH68) (Cyanothece sp. (strain ATCC 51142)) protein is Pyridoxine 5'-phosphate synthase.